We begin with the raw amino-acid sequence, 204 residues long: Somatotropin (204 aa).

The N-terminal stretch at 1–17 (MDKVLFLLFVLSLGVSS) is a signal peptide. Position 18 is a pyrrolidone carboxylic acid (Gln-18). Zn(2+) is bound at residue His-36. The cysteines at positions 69 and 177 are disulfide-linked. Glu-186 contributes to the Zn(2+) binding site. The cysteines at positions 194 and 202 are disulfide-linked.

Belongs to the somatotropin/prolactin family.

It localises to the secreted. Growth hormone plays an important role in growth control and is involved in the regulation of several anabolic processes. Implicated as an osmoregulatory substance important for seawater adaptation. The chain is Somatotropin (gh) from Trichopodus trichopterus (Three spot gourami).